A 367-amino-acid polypeptide reads, in one-letter code: UDP-N-acetylglucosamine--N-acetylmuramyl-(pentapeptide) pyrophosphoryl-undecaprenol N-acetylglucosamine transferase (367 aa).

UDP-N-acetyl-alpha-D-glucosamine contacts are provided by residues threonine 15 to glycine 17, asparagine 127, arginine 163, serine 191, isoleucine 249, and glutamine 294.

The protein belongs to the glycosyltransferase 28 family. MurG subfamily.

It is found in the cell inner membrane. It catalyses the reaction di-trans,octa-cis-undecaprenyl diphospho-N-acetyl-alpha-D-muramoyl-L-alanyl-D-glutamyl-meso-2,6-diaminopimeloyl-D-alanyl-D-alanine + UDP-N-acetyl-alpha-D-glucosamine = di-trans,octa-cis-undecaprenyl diphospho-[N-acetyl-alpha-D-glucosaminyl-(1-&gt;4)]-N-acetyl-alpha-D-muramoyl-L-alanyl-D-glutamyl-meso-2,6-diaminopimeloyl-D-alanyl-D-alanine + UDP + H(+). Its pathway is cell wall biogenesis; peptidoglycan biosynthesis. Cell wall formation. Catalyzes the transfer of a GlcNAc subunit on undecaprenyl-pyrophosphoryl-MurNAc-pentapeptide (lipid intermediate I) to form undecaprenyl-pyrophosphoryl-MurNAc-(pentapeptide)GlcNAc (lipid intermediate II). This Burkholderia cenocepacia (strain ATCC BAA-245 / DSM 16553 / LMG 16656 / NCTC 13227 / J2315 / CF5610) (Burkholderia cepacia (strain J2315)) protein is UDP-N-acetylglucosamine--N-acetylmuramyl-(pentapeptide) pyrophosphoryl-undecaprenol N-acetylglucosamine transferase.